The primary structure comprises 247 residues: MPDKNIVEDVIGDLVDNFTETVQKNKHGSSFFEQEDSVSSRFNRLFDRQKPIHHVLGGGKSADVLLWRNKKISASVLMGATAIWVLFEWINFHFLSLVCYALLLGMIAQFVWSNASGFLNRSQSRVPRLVLPKDFFAEVGVAVGKEVNRGLLFLQDLACKGNLKQFLMAVIGLWVAAMVGSCCNFLTVLYIGFVGAHTMPVLYERYEDEVDGFMDSMIMKFHSHYKKLDTGFLSRIPSGKFGLKKRE.

One can recognise a Reticulon domain in the interval 61–247; it reads SADVLLWRNK…SGKFGLKKRE (187 aa). Helical transmembrane passes span 71–91, 92–112, and 166–186; these read KISA…EWIN, FHFL…QFVW, and FLMA…CNFL.

The protein resides in the endoplasmic reticulum membrane. The sequence is that of Reticulon-like protein B8 (RTNLB8) from Arabidopsis thaliana (Mouse-ear cress).